Consider the following 637-residue polypeptide: tRNA 5-methylaminomethyl-2-thiouridine biosynthesis bifunctional protein MnmC (637 aa).

A disordered region spans residues 1 to 20; that stretch reads MSERIEWLEDGTAGGSPYSP. Residues 1 to 232 are tRNA (mnm(5)s(2)U34)-methyltransferase; that stretch reads MSERIEWLED…KRDNLQGEYQ (232 aa). An FAD-dependent cmnm(5)s(2)U34 oxidoreductase region spans residues 255–637; it reads IGAGLAGSAV…YATRLQPSGS (383 aa).

The protein in the N-terminal section; belongs to the methyltransferase superfamily. tRNA (mnm(5)s(2)U34)-methyltransferase family. This sequence in the C-terminal section; belongs to the DAO family. FAD is required as a cofactor.

The protein localises to the cytoplasm. The catalysed reaction is 5-aminomethyl-2-thiouridine(34) in tRNA + S-adenosyl-L-methionine = 5-methylaminomethyl-2-thiouridine(34) in tRNA + S-adenosyl-L-homocysteine + H(+). Catalyzes the last two steps in the biosynthesis of 5-methylaminomethyl-2-thiouridine (mnm(5)s(2)U) at the wobble position (U34) in tRNA. Catalyzes the FAD-dependent demodification of cmnm(5)s(2)U34 to nm(5)s(2)U34, followed by the transfer of a methyl group from S-adenosyl-L-methionine to nm(5)s(2)U34, to form mnm(5)s(2)U34. The sequence is that of tRNA 5-methylaminomethyl-2-thiouridine biosynthesis bifunctional protein MnmC from Polaromonas naphthalenivorans (strain CJ2).